A 458-amino-acid chain; its full sequence is ATP synthase subunit beta (458 aa).

Residue 148–155 coordinates ATP; sequence GGAGVGKT.

Belongs to the ATPase alpha/beta chains family. As to quaternary structure, F-type ATPases have 2 components, CF(1) - the catalytic core - and CF(0) - the membrane proton channel. CF(1) has five subunits: alpha(3), beta(3), gamma(1), delta(1), epsilon(1). CF(0) has three main subunits: a(1), b(2) and c(9-12). The alpha and beta chains form an alternating ring which encloses part of the gamma chain. CF(1) is attached to CF(0) by a central stalk formed by the gamma and epsilon chains, while a peripheral stalk is formed by the delta and b chains.

The protein resides in the cell inner membrane. The enzyme catalyses ATP + H2O + 4 H(+)(in) = ADP + phosphate + 5 H(+)(out). Functionally, produces ATP from ADP in the presence of a proton gradient across the membrane. The catalytic sites are hosted primarily by the beta subunits. This chain is ATP synthase subunit beta, found in Legionella pneumophila (strain Paris).